The sequence spans 1216 residues: DNA-directed RNA polymerase subunit beta' (1216 aa).

Cys-60, Cys-62, Cys-75, and Cys-78 together coordinate Zn(2+). The Mg(2+) site is built by Asp-450, Asp-452, and Asp-454. Zn(2+)-binding residues include Cys-819, Cys-893, Cys-900, and Cys-903.

Belongs to the RNA polymerase beta' chain family. As to quaternary structure, the RNAP catalytic core consists of 2 alpha, 1 beta, 1 beta' and 1 omega subunit. When a sigma factor is associated with the core the holoenzyme is formed, which can initiate transcription. Mg(2+) is required as a cofactor. The cofactor is Zn(2+).

It carries out the reaction RNA(n) + a ribonucleoside 5'-triphosphate = RNA(n+1) + diphosphate. Functionally, DNA-dependent RNA polymerase catalyzes the transcription of DNA into RNA using the four ribonucleoside triphosphates as substrates. In Streptococcus agalactiae serotype Ia (strain ATCC 27591 / A909 / CDC SS700), this protein is DNA-directed RNA polymerase subunit beta'.